We begin with the raw amino-acid sequence, 76 residues long: uncharacterized protein (76 aa).

This is an uncharacterized protein from Archaeoglobus fulgidus (strain ATCC 49558 / DSM 4304 / JCM 9628 / NBRC 100126 / VC-16).